The primary structure comprises 77 residues: Large ribosomal subunit protein bL28 (77 aa).

The protein belongs to the bacterial ribosomal protein bL28 family.

The polypeptide is Large ribosomal subunit protein bL28 (Karelsulcia muelleri (strain GWSS) (Sulcia muelleri)).